Consider the following 324-residue polypeptide: MTYWTSEDNVAGKPGTALFIILPTIGCYRYRIGQACYMCSYPTAAPKVKWTQEAIVNYVKEALEKIEGTEGPFAVRMFTSGSFLDNGELKPETRRKIFEILAEMDNVEEIVIESRSELVRYEAVKELAEIVPDKHFEVAIGLETANDDVADVSINKGNTFADFVKAAEITHKAGAKVKTYLLLKPIFLSERDGVEDAKESIIKAEPYTDTFSINITDIQKGTLYERLWEKKEYRPPWLWSAVEVLIWAKRKFPNKRILSDPVGAGSKRGPHNCLTDYDRVIGKAIKKFSATQDLSYIENLKPECRDRWEYIVENGLLDWQLVTW.

The region spanning 12 to 254 (GKPGTALFII…LIWAKRKFPN (243 aa)) is the Radical SAM core domain. The [4Fe-4S] cluster site is built by cysteine 27, cysteine 36, and cysteine 39.

It belongs to the radical SAM superfamily. RaSEA family. In terms of assembly, forms a robust complex with the archaeosine synthase alpha subunit ArcS, likely an alpha(2)beta(2) heterotetrameric structure. [4Fe-4S] cluster is required as a cofactor.

It catalyses the reaction 7-N-[(5S)-5-amino-5-carboxypentyl]formamidino-7-deazaguanosine(15) in tRNA + S-adenosyl-L-methionine = archaeosine(15) in tRNA + L-1-piperideine-6-carboxylate + 5'-deoxyadenosine + L-methionine + 2 H(+). The protein operates within tRNA modification; archaeosine-tRNA biosynthesis. Radical SAM enzyme involved in the synthesis of archaeosine, a modified nucleoside present in the dihydrouridine loop (D-loop) of archaeal tRNAs. Catalyzes the cleavage of the C(epsilon)-N bond of the lysine moiety of q0kN15-tRNA, leading to the formation of archaeosine at position 15 in tRNAs. This chain is Archaeosine synthase subunit beta, found in Thermococcus kodakarensis (strain ATCC BAA-918 / JCM 12380 / KOD1) (Pyrococcus kodakaraensis (strain KOD1)).